We begin with the raw amino-acid sequence, 309 residues long: Taste receptor type 2 member 43 (309 aa).

A topological domain (extracellular) is located at residue M1. The chain crosses the membrane as a helical span at residues 2 to 22 (ITFLPIIFSSLVVVTFVIGNF). The Cytoplasmic segment spans residues 23–46 (ANGFIALVNSIEWFKRQKISFADQ). Residues 47–67 (ILTALAVSRVGLLWVLLLNWY) traverse the membrane as a helical segment. Residues 68–86 (STVLNPAFNSVEVRTTAYN) are Extracellular-facing. The chain crosses the membrane as a helical span at residues 87–107 (IWAVINHFSNWLATSLSIFYL). Over 108 to 126 (LKIANFSNFIFLHLKRRVK) the chain is Cytoplasmic. The chain crosses the membrane as a helical span at residues 127–147 (SVILVMLLGPLLFLACHLFVI). Over 148–178 (NMNEIVRTKEFEGNMTWKIKLKSAMYFSNMT) the chain is Extracellular. N161 and N176 each carry an N-linked (GlcNAc...) asparagine glycan. A helical membrane pass occupies residues 179–199 (VTMVANLVPFTLTLLSFLLLI). The Cytoplasmic portion of the chain corresponds to 200–229 (CSLCKHLKKMQLHGKGSQDPSTKVHIKVLQ). Residues 230–250 (TVISFLLLCAIYFLSIMISVW) traverse the membrane as a helical segment. At 251 to 259 (SFGSLKNKP) the chain is on the extracellular side. A helical transmembrane segment spans residues 260–280 (VFMFCKAMRFSYPSIHPFILI). The Cytoplasmic segment spans residues 281–309 (WGNKKLKQTFLSVFWQMRYWVKGEKTSSP).

Belongs to the G-protein coupled receptor T2R family.

It is found in the membrane. The protein localises to the cell projection. The protein resides in the cilium membrane. Functionally, gustducin-coupled receptor immplicated in the perception of bitter compounds in the oral cavity and the gastrointestinal tract. Signals through PLCB2 and the calcium-regulated cation channel TRPM5. Activated by the sulfonyl amide sweeteners saccharin and acesulfame K. In airway epithelial cells, binding of bitter compounds increases the intracellular calcium ion concentration and stimulates ciliary beat frequency. May act as chemosensory receptors in airway epithelial cells to detect and eliminate potential noxious agents from the airways. The chain is Taste receptor type 2 member 43 (TAS2R43) from Pan troglodytes (Chimpanzee).